Here is a 57-residue protein sequence, read N- to C-terminus: Serine protease inhibitor Kazal-type 1 (57 aa).

The Kazal-like domain maps to 4–57; sequence LQRQANCNLKVNGCNKIYNPICGSDGITYANECLLCLENKKRQTSILVEKSGPC. Cystine bridges form between cysteine 10–cysteine 39, cysteine 17–cysteine 36, and cysteine 25–cysteine 57.

It is found in the secreted. Serine protease inhibitor which exhibits anti-trypsin activity. In the pancreas, protects against trypsin-catalyzed premature activation of zymogens. Its function is as follows. In the male reproductive tract, binds to sperm heads where it modulates sperm capacitance by inhibiting calcium uptake and nitrogen oxide (NO) production. This chain is Serine protease inhibitor Kazal-type 1 (SPINK1), found in Canis lupus familiaris (Dog).